The primary structure comprises 438 residues: Trigger factor (438 aa).

The region spanning 170–255 is the PPIase FKBP-type domain; it reads GDTVVIDFDG…IHELKKLETP (86 aa).

The protein belongs to the FKBP-type PPIase family. Tig subfamily.

The protein localises to the cytoplasm. It catalyses the reaction [protein]-peptidylproline (omega=180) = [protein]-peptidylproline (omega=0). Its function is as follows. Involved in protein export. Acts as a chaperone by maintaining the newly synthesized protein in an open conformation. Functions as a peptidyl-prolyl cis-trans isomerase. The protein is Trigger factor (tig) of Oenococcus oeni (Leuconostoc oenos).